The primary structure comprises 330 residues: Lysophospholipase D GDPD3 (330 aa).

Position 1 (Met-1) is a topological domain, cytoplasmic. A helical membrane pass occupies residues Ile-2–Phe-22. Topologically, residues Leu-23–Thr-200 are extracellular. Residues Ile-39–Leu-308 form the GP-PDE domain. 3 residues coordinate a divalent metal cation: Glu-71, Asp-73, and His-86. A helical membrane pass occupies residues Ile-201 to Ile-221. The Cytoplasmic segment spans residues Pro-222–Lys-330. The disordered stretch occupies residues Gln-311–Lys-330.

Belongs to the glycerophosphoryl diester phosphodiesterase family. As to expression, highly expressed in stomach and kidney. In stomach detected in the glandular epithelium. Predominantly expressed in the stomach (at protein level).

It is found in the membrane. The protein resides in the cytoplasm. It localises to the perinuclear region. Its subcellular location is the endoplasmic reticulum membrane. The enzyme catalyses 1-hexadecanoyl-sn-glycero-3-phosphocholine + H2O = 1-hexadecanoyl-sn-glycero-3-phosphate + choline + H(+). The catalysed reaction is 1-O-hexadecyl-sn-glycero-3-phosphocholine + H2O = 1-O-hexadecyl-sn-glycero-3-phosphate + choline + H(+). It carries out the reaction 1-O-(1Z-octadecenyl)-sn-glycero-3-phospho-N-hexadecanoyl-ethanolamine + H2O = 1-O-(1Z-octadecenyl)-sn-glycero-3-phosphate + N-hexadecanoylethanolamine + H(+). It catalyses the reaction N-(5Z,8Z,11Z,14Z-eicosatetraenoyl)-1-(9Z-octadecenoyl)-sn-glycero-3-phosphoethanolamine + H2O = N-(5Z,8Z,11Z,14Z-eicosatetraenoyl)-ethanolamine + 1-(9Z-octadecenoyl)-sn-glycero-3-phosphate + H(+). The enzyme catalyses N,1-di-(9Z-octadecenoyl)-sn-glycero-3-phosphoethanolamine + H2O = N-(9Z-octadecenoyl) ethanolamine + 1-(9Z-octadecenoyl)-sn-glycero-3-phosphate + H(+). The catalysed reaction is N-hexadecanoyl-1-(9Z-octadecenoyl)-sn-glycero-3-phosphoethanolamine + H2O = N-hexadecanoylethanolamine + 1-(9Z-octadecenoyl)-sn-glycero-3-phosphate + H(+). It carries out the reaction 1-hexadecanoyl-sn-glycero-3-phosphocholine + H2O = sn-glycerol 3-phosphocholine + hexadecanoate + H(+). Lysophospholipase D activity is stimulated by calcium. Loss of lysophospholipase D activity in presence of EDTA. Functionally, hydrolyzes lysoglycerophospholipids to produce lysophosphatidic acid (LPA) and the corresponding amines. Shows a preference for 1-O-alkyl-sn-glycero-3-phosphocholine (lyso-PAF), lysophosphatidylcholine (lyso-PC) and N-acylethanolamine lysophospholipids. Does not display glycerophosphodiester phosphodiesterase activity, since it cannot hydrolyze either glycerophosphoinositol or glycerophosphocholine. This is Lysophospholipase D GDPD3 from Mus musculus (Mouse).